Reading from the N-terminus, the 185-residue chain is Ribosome-recycling factor (185 aa).

It belongs to the RRF family.

Its subcellular location is the cytoplasm. Responsible for the release of ribosomes from messenger RNA at the termination of protein biosynthesis. May increase the efficiency of translation by recycling ribosomes from one round of translation to another. The chain is Ribosome-recycling factor from Corynebacterium aurimucosum (strain ATCC 700975 / DSM 44827 / CIP 107346 / CN-1) (Corynebacterium nigricans).